A 220-amino-acid polypeptide reads, in one-letter code: UPF0319 protein YccT (220 aa).

The first 20 residues, 1–20, serve as a signal peptide directing secretion; the sequence is MKTGALTTFLALCLPVTVFA.

Belongs to the UPF0319 family.

The protein is UPF0319 protein YccT of Salmonella dublin (strain CT_02021853).